The following is a 61-amino-acid chain: UPF0434 protein Avin_14770 (61 aa).

This sequence belongs to the UPF0434 family.

This chain is UPF0434 protein Avin_14770, found in Azotobacter vinelandii (strain DJ / ATCC BAA-1303).